Reading from the N-terminus, the 633-residue chain is uncharacterized protein (633 aa).

The interval 12-43 (ESGTNNYSDTIANGNTLPPRSKKGHSGRRKRS) is disordered. The segment covering 13–29 (SGTNNYSDTIANGNTLP) has biased composition (polar residues). Positions 31 to 42 (RSKKGHSGRRKR) are enriched in basic residues. Helical transmembrane passes span 99 to 118 (ILFG…SSAL) and 217 to 233 (NCAF…ITAC). Residues 593-612 (DAETNKATGSAKSENIETKS) are disordered.

Its subcellular location is the membrane. This is an uncharacterized protein from Saccharomyces cerevisiae (strain ATCC 204508 / S288c) (Baker's yeast).